The sequence spans 199 residues: Putative ATP-dependent Clp protease proteolytic subunit-like (199 aa).

Belongs to the peptidase S14 family. As to quaternary structure, component of the chloroplastic Clp protease core complex.

It localises to the plastid. Its subcellular location is the cyanelle. Functionally, has lost the two conserved residues (Ser and His) proposed to be part of the active site. Therefore it could be inactive. This chain is Putative ATP-dependent Clp protease proteolytic subunit-like (clpP-B), found in Cyanophora paradoxa.